A 168-amino-acid chain; its full sequence is MDGAARAVSLFFRIAVVGLSVAAAVVMATASQAFPFNYGGAVSYTKYPAFVYFVVAAVVSAVCSAAALYLSVVREAAAGWAVALLDVVTMGLLFSAAGAVFAVRRMAPLYLGVAGADTVAGRWVNGEFCHAAGAFCWRVTTSAIICAFAAAAVSVAVLTKGARHRGKH.

The Cytoplasmic segment spans residues 1–6 (MDGAAR). A helical transmembrane segment spans residues 7-27 (AVSLFFRIAVVGLSVAAAVVM). Residues 28-49 (ATASQAFPFNYGGAVSYTKYPA) are Extracellular-facing. The chain crosses the membrane as a helical span at residues 50-70 (FVYFVVAAVVSAVCSAAALYL). Residues 71–80 (SVVREAAAGW) are Cytoplasmic-facing. The chain crosses the membrane as a helical span at residues 81-101 (AVALLDVVTMGLLFSAAGAVF). At 102-138 (AVRRMAPLYLGVAGADTVAGRWVNGEFCHAAGAFCWR) the chain is on the extracellular side. A helical transmembrane segment spans residues 139 to 159 (VTTSAIICAFAAAAVSVAVLT). The Cytoplasmic segment spans residues 160 to 168 (KGARHRGKH).

The protein belongs to the Casparian strip membrane proteins (CASP) family. Homodimer and heterodimers.

It localises to the cell membrane. This is CASP-like protein 1U1 from Oryza sativa subsp. japonica (Rice).